We begin with the raw amino-acid sequence, 501 residues long: Pentatricopeptide repeat-containing protein At4g16470 (501 aa).

PPR repeat units follow at residues 107–141 (EPET…GFAL), 142–172 (NEYL…LKIR), 173–207 (DLIP…RIVP), 208–242 (DQYT…CIKS), 243–273 (NIIV…LSTR), 274–308 (NVIT…GCRP), 309–344 (NPVT…GIEP), and 345–379 (EGQH…EHPP). The tract at residues 380-455 (VWGSLLGACR…DPGYSQIELQ (76 aa)) is type E motif. The type E(+) motif stretch occupies residues 456-486 (GEVHRFMKDDTSHRLSEKIYKKVHEMTSFFM).

Belongs to the PPR family. PCMP-E subfamily.

This is Pentatricopeptide repeat-containing protein At4g16470 (PCMP-E12) from Arabidopsis thaliana (Mouse-ear cress).